We begin with the raw amino-acid sequence, 414 residues long: 3-isopropylmalate dehydratase large subunit (414 aa).

[4Fe-4S] cluster-binding residues include C295, C353, and C356.

It belongs to the aconitase/IPM isomerase family. LeuC type 2 subfamily. In terms of assembly, heterodimer of LeuC and LeuD. [4Fe-4S] cluster serves as cofactor.

It carries out the reaction (2R,3S)-3-isopropylmalate = (2S)-2-isopropylmalate. It functions in the pathway amino-acid biosynthesis; L-leucine biosynthesis; L-leucine from 3-methyl-2-oxobutanoate: step 2/4. Functionally, catalyzes the isomerization between 2-isopropylmalate and 3-isopropylmalate, via the formation of 2-isopropylmaleate. The chain is 3-isopropylmalate dehydratase large subunit from Pyrobaculum islandicum (strain DSM 4184 / JCM 9189 / GEO3).